We begin with the raw amino-acid sequence, 342 residues long: tRNA N6-adenosine threonylcarbamoyltransferase (342 aa).

Fe cation is bound by residues His-111 and His-115. Substrate-binding positions include 133–137 (AVSGG), Asp-166, Gly-179, Asp-183, and Asn-272. Residue Asp-300 coordinates Fe cation.

The protein belongs to the KAE1 / TsaD family. Fe(2+) is required as a cofactor.

The protein resides in the cytoplasm. The enzyme catalyses L-threonylcarbamoyladenylate + adenosine(37) in tRNA = N(6)-L-threonylcarbamoyladenosine(37) in tRNA + AMP + H(+). Required for the formation of a threonylcarbamoyl group on adenosine at position 37 (t(6)A37) in tRNAs that read codons beginning with adenine. Is involved in the transfer of the threonylcarbamoyl moiety of threonylcarbamoyl-AMP (TC-AMP) to the N6 group of A37, together with TsaE and TsaB. TsaD likely plays a direct catalytic role in this reaction. The sequence is that of tRNA N6-adenosine threonylcarbamoyltransferase from Geobacter sp. (strain M21).